Consider the following 146-residue polypeptide: 3-hydroxyacyl-[acyl-carrier-protein] dehydratase FabZ (146 aa).

Histidine 49 is an active-site residue.

The protein belongs to the thioester dehydratase family. FabZ subfamily.

Its subcellular location is the cytoplasm. The catalysed reaction is a (3R)-hydroxyacyl-[ACP] = a (2E)-enoyl-[ACP] + H2O. In terms of biological role, involved in unsaturated fatty acids biosynthesis. Catalyzes the dehydration of short chain beta-hydroxyacyl-ACPs and long chain saturated and unsaturated beta-hydroxyacyl-ACPs. The chain is 3-hydroxyacyl-[acyl-carrier-protein] dehydratase FabZ from Pseudomonas putida (strain ATCC 700007 / DSM 6899 / JCM 31910 / BCRC 17059 / LMG 24140 / F1).